We begin with the raw amino-acid sequence, 196 residues long: SPRY domain-containing protein 7 (196 aa).

At A2 the chain carries N-acetylalanine. In terms of domain architecture, B30.2/SPRY spans 2–184 (AASAWCCLRC…FSEFYHTPPP (183 aa)).

In Mus musculus (Mouse), this protein is SPRY domain-containing protein 7 (Spryd7).